An 821-amino-acid chain; its full sequence is Glycogen phosphorylase (821 aa).

Lysine 667 carries the N6-(pyridoxal phosphate)lysine modification.

This sequence belongs to the glycogen phosphorylase family. It depends on pyridoxal 5'-phosphate as a cofactor.

It carries out the reaction [(1-&gt;4)-alpha-D-glucosyl](n) + phosphate = [(1-&gt;4)-alpha-D-glucosyl](n-1) + alpha-D-glucose 1-phosphate. Functionally, phosphorylase is an important allosteric enzyme in carbohydrate metabolism. Enzymes from different sources differ in their regulatory mechanisms and in their natural substrates. However, all known phosphorylases share catalytic and structural properties. The protein is Glycogen phosphorylase (glgP) of Haemophilus influenzae (strain ATCC 51907 / DSM 11121 / KW20 / Rd).